A 462-amino-acid polypeptide reads, in one-letter code: Nitrate/nitrite transporter NarU (462 aa).

At 1 to 35 (MALQNEKNSRYLLRDWKPENPAFWENKGKHIARRN) the chain is on the cytoplasmic side. The helical transmembrane segment at 36 to 56 (LWISVSCLLLAFCVWMLFSAV) threads the bilayer. Residues 57–76 (TVNLNKIGFNFTTDQLFLLT) are Periplasmic-facing. Residues 77–97 (ALPSVSGALLRVPYSFMVPIF) form a helical membrane-spanning segment. Over 98–101 (GGRR) the chain is Cytoplasmic. The helical transmembrane segment at 102 to 122 (WTVFSTAILIIPCVWLGIAVQ) threads the bilayer. Over 123–125 (NPN) the chain is Periplasmic. Residues 126-146 (TPFGIFIVIALLCGFAGANFA) traverse the membrane as a helical segment. Over 147–180 (SSMGNISFFFPKAKQGSALGINGGLGNLGVSVMQ) the chain is Cytoplasmic. Residues 181-201 (LVAPLVIFVPVFAFLGVNGVP) form a helical membrane-spanning segment. The Periplasmic portion of the chain corresponds to 202–206 (QADGS). The chain crosses the membrane as a helical span at residues 207–227 (VMSLANAAWIWVPLLAIATIA). Residues 228-258 (AWSGMNDIASSRASIADQLPVLQRLHLWLLS) are Cytoplasmic-facing. The chain crosses the membrane as a helical span at residues 259–279 (LLYLATFGSFIGFSAGFAMLA). Over 280–287 (KTQFPDVN) the chain is Periplasmic. A helical membrane pass occupies residues 288 to 308 (ILRLAFFGPFIGAIARSVGGA). Residues 309–317 (ISDKFGGVR) lie on the Cytoplasmic side of the membrane. A helical membrane pass occupies residues 318–338 (VTLINFIFMAIFSALLFLTLP). At 339–344 (GTGSGN) the chain is on the periplasmic side. The chain crosses the membrane as a helical span at residues 345–365 (FIAFYAVFMGLFLTAGLGSGS). The Cytoplasmic portion of the chain corresponds to 366-401 (TFQMIAVIFRQITIYRVKMKGGSDEQAHKEAVTETA). Residues 402–422 (AALGFISAIGAVGGFFIPQAF) traverse the membrane as a helical segment. At 423-432 (GMSLNMTGSP) the chain is on the periplasmic side. Residues 433 to 453 (VGAMKVFLIFYIVCVLLTWLV) traverse the membrane as a helical segment. Residues 454 to 462 (YGRRKFSQK) are Cytoplasmic-facing.

Belongs to the major facilitator superfamily. Nitrate/nitrite porter (TC 2.A.1.8) family.

It localises to the cell inner membrane. Catalyzes nitrate uptake, nitrite uptake and nitrite export across the cytoplasmic membrane. May function as a nitrate/H(+) and nitrite/H(+) channel. Could confer a selective advantage during severe nutrient starvation or slow growth. This is Nitrate/nitrite transporter NarU (narU) from Escherichia coli (strain K12).